The primary structure comprises 499 residues: Zinc finger protein PLAG1 (499 aa).

The interval 1-33 (MATVIPGDLSEVRDTQKAPSGKRKRGESKPRKN) is disordered. The tract at residues 2–84 (ATVIPGDLSE…SKYKLQRHMA (83 aa)) is interaction with KPNA2. The short motif at 22–25 (KRKR) is the Nuclear localization signal element. C2H2-type zinc fingers lie at residues 34-56 (FPCQ…SFSH), 62-86 (YKCT…MATH), 92-114 (HKCN…LHTH), 121-143 (FKCE…LALH), 150-172 (LTCK…LKSH), 185-207 (HQCE…MVVH), and 213-236 (FLCQ…KKSH). Positions 41-242 (KAFNSVEKLK…KKSHNQELLK (202 aa)) are decreased nuclear import with localization in the nucleus but also in the cytoplasm. The segment at 243–383 (VKTEPVDFLD…SPASSSKLGL (141 aa)) is repression domain; contains 3 sumoylation motifs and massively decrease transcription activity. Residues 243–499 (VKTEPVDFLD…TLPRFHQAFQ (257 aa)) form an activates transcription; Inhibition of nuclear import due to lack of NLS and KPNA2 interaction region. Residues Lys-244 and Lys-263 each participate in a glycyl lysine isopeptide (Lys-Gly) (interchain with G-Cter in SUMO) cross-link. The span at 365–379 (GGAPSSSQDSPASSS) shows a compositional bias: low complexity. A disordered region spans residues 365–400 (GGAPSSSQDSPASSSKLGLEPQSGSPDDGAGDLSLS). Residues 384-499 (EPQSGSPDDG…TLPRFHQAFQ (116 aa)) form a massively activates transcription region.

The protein belongs to the krueppel C2H2-type zinc-finger protein family. As to quaternary structure, interacts with KPNA2, which escorts protein to the nucleus via interaction with nuclear localization signal. Interacts with E3 SUMO-protein ligase PIAS1, PIAS2 and PIAS4. Post-translationally, sumoylated with SUMO1; which inhibits transcriptional activity, but does not affect nuclear localization. Blockers of sumoylation pathway such as SENP3 and inactive UBE2I increases transcriptional capacity. Sumoylation is increased in the presence of PIAS1. Acetylated by lysine acetyltransferase EP300; which activates transcriptional capacity. Lysine residues that are sumoylated also seem to be target for acetylation. As to expression, expressed in heart, spleen, lung, kidney, brain, testis and epididymis but not in salivary glands.

The protein resides in the nucleus. In terms of biological role, transcription factor whose activation results in up-regulation of target genes, such as IGFII, leading to uncontrolled cell proliferation: when overexpressed in cultured cells, higher proliferation rate and transformation are observed. Other target genes such as CRLF1, CRABP2, CRIP2, PIGF are strongly induced in cells with PLAG1 induction. Proto-oncogene whose ectopic expression can trigger the development of pleomorphic adenomas of the salivary gland and lipoblastomas. Cooperates with CBFB-MYH11. The protein is Zinc finger protein PLAG1 (Plag1) of Mus musculus (Mouse).